We begin with the raw amino-acid sequence, 355 residues long: Trans-enoyl reductase (355 aa).

An NADP(+)-binding site is contributed by 45 to 48 (VDTK). 131-138 (ISFMTTGL) serves as a coordination point for substrate. Residues 166 to 169 (SSAT), 189 to 192 (SPRN), Tyr207, and 254 to 255 (LE) contribute to the NADP(+) site. 275–279 (GPQML) lines the substrate pocket. 344–345 (IS) contacts NADP(+).

Belongs to the zinc-containing alcohol dehydrogenase family. As to quaternary structure, monomer.

It catalyses the reaction L-serine + 7 malonyl-CoA + acetyl-CoA + 2 S-adenosyl-L-methionine + ATP + 8 NADPH + 11 H(+) = (5S)-3-[(2E,6R,8E,10E,12E)-2,6-dimethyltetradeca-2,8,10,12-tetraenoyl]-5-(hydroxymethyl)pyrrolidine-2,4-dione + AMP + 2 S-adenosyl-L-homocysteine + 7 CO2 + diphosphate + 8 NADP(+) + 8 CoA + 6 H2O. Its pathway is mycotoxin biosynthesis. Functionally, hybrid PKS-NRPS synthetase; part of the gene cluster that mediates the biosynthesis of trichosetin, a trans-fused decalin-containing tetramic acid with antimicrobial activity. The PKS module of PKS-NRPS1 together with the enoylreductase (ER) catalyze the formation of the polyketide unit which is then conjugated to L-serine by the condensation domain of the PKS-NRPS1 NRPS module. Activity of the Dieckmann cyclase domain (RED) results in release of the Dieckmann product intermediate. Diels-Alderase (DA) is involved in endo-selective Diels-Alder cycloaddition to form the decalin ring, leading to the production of N-desmethylequisetin also called trichosetin. The cluster does not contain the equisetin N-methyltransferase and consequently, trichosetin is isolated as final product. This Gibberella fujikuroi (strain CBS 195.34 / IMI 58289 / NRRL A-6831) (Bakanae and foot rot disease fungus) protein is Trans-enoyl reductase.